The chain runs to 259 residues: Deoxyribose-phosphate aldolase (259 aa).

Asp104 functions as the Proton donor/acceptor in the catalytic mechanism. The active-site Schiff-base intermediate with acetaldehyde is Lys168. The active-site Proton donor/acceptor is Lys200.

It belongs to the DeoC/FbaB aldolase family. DeoC type 2 subfamily.

Its subcellular location is the cytoplasm. The catalysed reaction is 2-deoxy-D-ribose 5-phosphate = D-glyceraldehyde 3-phosphate + acetaldehyde. It functions in the pathway carbohydrate degradation; 2-deoxy-D-ribose 1-phosphate degradation; D-glyceraldehyde 3-phosphate and acetaldehyde from 2-deoxy-alpha-D-ribose 1-phosphate: step 2/2. Functionally, catalyzes a reversible aldol reaction between acetaldehyde and D-glyceraldehyde 3-phosphate to generate 2-deoxy-D-ribose 5-phosphate. The polypeptide is Deoxyribose-phosphate aldolase (Agrobacterium fabrum (strain C58 / ATCC 33970) (Agrobacterium tumefaciens (strain C58))).